The chain runs to 503 residues: Catalase (503 aa).

Positions 1–21 are cleaved as a signal peptide; that stretch reads MHMSKSFLIISMGFVAVSVQA. Residues histidine 72 and asparagine 145 contribute to the active site. Heme is bound at residue tyrosine 353.

It belongs to the catalase family. The cofactor is heme.

It localises to the periplasm. The enzyme catalyses 2 H2O2 = O2 + 2 H2O. Functionally, decomposes hydrogen peroxide into water and oxygen; serves to protect cells from the toxic effects of hydrogen peroxide. The chain is Catalase from Vibrio cholerae serotype O1 (strain ATCC 39315 / El Tor Inaba N16961).